The following is a 69-amino-acid chain: U-scoloptoxin(21)-Sm2a (69 aa).

The first 21 residues, 1–21 (MFFLGFIIVCASEEQSDNRLP), serve as a signal peptide directing secretion. Positions 46–69 (ANDPNGPGRRRRSPIVREEILRHP) are disordered. The span at 60–69 (IVREEILRHP) shows a compositional bias: basic and acidic residues.

Belongs to the scoloptoxin-21 family. As to expression, expressed by the venom gland.

It is found in the secreted. The polypeptide is U-scoloptoxin(21)-Sm2a (Scolopendra morsitans (Tanzanian blue ringleg centipede)).